A 362-amino-acid chain; its full sequence is Transcription factor Sox-7 (362 aa).

The disordered stretch occupies residues Glu-21–Arg-41. Positions Ser-32–Arg-41 are enriched in basic and acidic residues. The HMG box DNA-binding region spans Ile-42–Lys-110. The 118-residue stretch at Gln-245–Ser-362 folds into the Sox C-terminal domain.

As to expression, expressed in the embryonic pronephric sinus as well as posterior cardinal veins.

It localises to the nucleus. Transcription factor. Binds to the DNA sequence 5'-AACAAT-3'. Acts downstream of vegt and upstream of nodal signaling to promote endodermal and mesodermal differentiation by promoting vegt-induced expression of both endodermal genes (including endodermin) and mesodermal genes (including snai1/snail and snai2/slug). Induces expression of multiple nodal genes (including nodal, nodal2, nodal4, nodal5 and nodal6) and binds directly to sites within the promoter of the nodal5 gene. The endodermal and mesodermal specification pathways then interact to initiate cardiogenesis. Acts partially redundantly with sox18 during cardiogenesis. Also acts as an antagonist of beta-catenin signaling. Regulates (possibly indirectly) development of the pronephros, the functional larval kidney. This chain is Transcription factor Sox-7, found in Xenopus tropicalis (Western clawed frog).